Here is a 436-residue protein sequence, read N- to C-terminus: GTPase Der (436 aa).

EngA-type G domains are found at residues 4–167 (PTIA…PNEE) and 175–351 (IKFS…QSQN). GTP is bound by residues 10-17 (GRPNVGKS), 57-61 (DTGGI), 119-122 (NKVD), 181-188 (GRPNVGKS), 229-233 (DTAGM), and 294-297 (NKWD). In terms of domain architecture, KH-like spans 352–436 (TRIPSAVLND…PIHLIARKRK (85 aa)).

This sequence belongs to the TRAFAC class TrmE-Era-EngA-EngB-Septin-like GTPase superfamily. EngA (Der) GTPase family. Associates with the 50S ribosomal subunit.

GTPase that plays an essential role in the late steps of ribosome biogenesis. This is GTPase Der from Streptococcus sanguinis (strain SK36).